The following is a 261-amino-acid chain: UPF0177 protein YvdC (261 aa).

6 helical membrane-spanning segments follow: residues 15–35 (WVIV…IFHL), 43–63 (VLSI…VLFI), 84–104 (LDTV…YLIA), 123–143 (IIIG…FAQI), 197–217 (YFAF…TDLY), and 239–259 (FYLN…IALV).

This sequence belongs to the UPF0177 family.

The protein localises to the cell membrane. This chain is UPF0177 protein YvdC (yvdC), found in Lactococcus lactis subsp. lactis (strain IL1403) (Streptococcus lactis).